Consider the following 105-residue polypeptide: Large ribosomal subunit protein eL42 (105 aa).

The interval 23–52 (KVTQYKKGKESRLAQGRRRYDSKQKGFGGQ) is disordered. Residues 29-46 (KGKESRLAQGRRRYDSKQ) show a composition bias toward basic and acidic residues.

Belongs to the eukaryotic ribosomal protein eL42 family.

This Brugia malayi (Filarial nematode worm) protein is Large ribosomal subunit protein eL42 (rpl-44).